The chain runs to 585 residues: Chaperonin CPN60-like 1, mitochondrial (585 aa).

A mitochondrion-targeting transit peptide spans 1–32 (MYRLVSNVASKARIARKCTSQIGSRLNSTRNY).

This sequence belongs to the chaperonin (HSP60) family.

Its subcellular location is the mitochondrion. Implicated in mitochondrial protein import and macromolecular assembly. May facilitate the correct folding of imported proteins. May also prevent misfolding and promote the refolding and proper assembly of unfolded polypeptides generated under stress conditions in the mitochondrial matrix. This chain is Chaperonin CPN60-like 1, mitochondrial, found in Arabidopsis thaliana (Mouse-ear cress).